An 88-amino-acid chain; its full sequence is Metastasis-suppressor KiSS-1 (88 aa).

Residues 1–13 show a composition bias toward polar residues; that stretch reads SVENSRPTGQQLE. Residues 1–88 form a disordered region; the sequence is SVENSRPTGQ…REKDLPNYNW (88 aa). The span at 33 to 55 shows a compositional bias: low complexity; sequence SATARLSRRGASLSSPAESSGSP. Positions 78-88 are enriched in basic and acidic residues; the sequence is QREKDLPNYNW. Tyrosine 86 carries the phosphotyrosine modification.

It belongs to the KISS1 family. As to expression, in the hypothalamus, expression increases with puberty in both male and female monkeys. Robust expression in the region of the arcuate nucleus (ARC).

Its subcellular location is the secreted. Its function is as follows. Metastasis suppressor protein. May regulate events downstream of cell-matrix adhesion, perhaps involving cytoskeletal reorganization. Generates a C-terminally amidated peptide, metastin which functions as the endogenous ligand of the G-protein coupled receptor GPR54. The receptor is essential for normal gonadotropin-released hormone physiology and for puberty. The hypothalamic KiSS1/GPR54 system is a pivotal factor in central regulation of the gonadotropic axis at puberty and in adulthood. The sequence is that of Metastasis-suppressor KiSS-1 (KISS1) from Macaca mulatta (Rhesus macaque).